A 421-amino-acid polypeptide reads, in one-letter code: U-box domain-containing protein 26 (421 aa).

The U-box domain maps to 13–87; that stretch reads QIPYHFRCPI…QEWCVANRSN (75 aa).

The enzyme catalyses S-ubiquitinyl-[E2 ubiquitin-conjugating enzyme]-L-cysteine + [acceptor protein]-L-lysine = [E2 ubiquitin-conjugating enzyme]-L-cysteine + N(6)-ubiquitinyl-[acceptor protein]-L-lysine.. It participates in protein modification; protein ubiquitination. Its function is as follows. Functions as an E3 ubiquitin ligase. The sequence is that of U-box domain-containing protein 26 (PUB26) from Arabidopsis thaliana (Mouse-ear cress).